A 332-amino-acid polypeptide reads, in one-letter code: Malate dehydrogenase (332 aa).

NAD(+) contacts are provided by residues 11 to 16 (GAGNVG) and D35. Residues R97 and R103 each contribute to the substrate site. Residues N110 and 133-135 (VTN) each bind NAD(+). Residues N135 and R166 each coordinate substrate. H190 serves as the catalytic Proton acceptor.

Belongs to the LDH/MDH superfamily. MDH type 3 family.

It catalyses the reaction (S)-malate + NAD(+) = oxaloacetate + NADH + H(+). Its function is as follows. Catalyzes the reversible oxidation of malate to oxaloacetate. The polypeptide is Malate dehydrogenase (Hydrogenobaculum sp. (strain Y04AAS1)).